The following is a 229-amino-acid chain: MEISKVRIQDIPEEERPRERLIRNGPESLSNSELLGVILRTGSNKENVVSLSSRIFSEYSIKQLSLANVSRLMKVHGVGKAKAAQIAAVFELARRLETFVEEPKRKVCSPKDVYTLMYPKMREQKKEKFITLCLDTKNQILKEEVVSIGSLNASIVHPREVFKSALMESSASVIMIHNHPSGDPSPSREDIMVTEKMVEGGKLLGIDVLDHIIIGEGRYVSLKDEGFVR.

Residues 106–228 (KVCSPKDVYT…YVSLKDEGFV (123 aa)) form the MPN domain. Zn(2+) is bound by residues His-177, His-179, and Asp-190. Residues 177 to 190 (HNHPSGDPSPSRED) carry the JAMM motif motif.

This sequence belongs to the UPF0758 family.

The protein is UPF0758 protein Mbar_A2303 of Methanosarcina barkeri (strain Fusaro / DSM 804).